Consider the following 792-residue polypeptide: MSTVPAKGPLTPQQLSLINRYWRAANYLSVGQIYLMKNPLLREPLQPEHIKPRLLGHWGTTPGLNFIYAHLNRIIQQRNANVIYICGPGHGGPGMVANTYLEGTYSEIYPAISEDEAGMERLFRQFSFPGGIPSHAAPETPGSIHEGGELGYALVHAYGAAFDNPDLVVACVVGDGEAETGALATSWHSNKFLNPARDGAVLPILHLNGYKIANPTVLARLSDDDLDNLFRGYGYEPFFVEGSEPADMHQKMAATLDTIFQRIQDIKKNADVHSPERPRWPMIILRSPKGWTGPKTVDGLVVENYWRAHQVPVANCRENDAHRKILEDWMKSYDPSDLFDEKGALKPELRALAPKGEARIGANPHANGGLLRKELHMPDFRQYAVNVTEPGAIEAQSTKILGDFLRDVMKLNETEKNFRIFGPDETASNRLGSVLEATNRVWMAETLDMDDHLAADGRVMEVLSEHLCQGWLEGYLLSGRHGFFSCYEAFIHIIDSMFNQHAKWLQVARELEWRKPISSLNYLLTSHVWRQDHNGFSHQDPGFVDLVANKSADIARVYFPPDANTLLWVGDHCLKTWNRVNVIVAGKQPEPQWLTMAEAEKHCEAGLGIWEWAGTEDGLEPDIVMACAGDVPTMETLAAVDLLRQSLPHLRIRVVNVVDLMVLQSPHQHPHGISDEEFDRMFTTNRPVIFAYHGYPYLIHRLVYKRTNHSNFHVRGFIEQGTTTTPFDMTVLNELDRFHLAMEAVERLPLGESVAKPLIDNFTEKLALHKDYIRQHGEDMPEIRDWKWTWPR.

The protein belongs to the XFP family. Thiamine diphosphate is required as a cofactor.

This chain is Probable phosphoketolase, found in Brucella melitensis biotype 1 (strain ATCC 23456 / CCUG 17765 / NCTC 10094 / 16M).